The primary structure comprises 177 residues: 3-isopropylmalate dehydratase small subunit 1 (177 aa).

The tract at residues 157-177 is disordered; that stretch reads GRFPGEEPGAEASTETASAAE. Residues 162–177 are compositionally biased toward low complexity; that stretch reads EEPGAEASTETASAAE.

Belongs to the LeuD family. LeuD type 2 subfamily. Heterodimer of LeuC and LeuD.

It carries out the reaction (2R,3S)-3-isopropylmalate = (2S)-2-isopropylmalate. The protein operates within amino-acid biosynthesis; L-leucine biosynthesis; L-leucine from 3-methyl-2-oxobutanoate: step 2/4. Catalyzes the isomerization between 2-isopropylmalate and 3-isopropylmalate, via the formation of 2-isopropylmaleate. This Deinococcus radiodurans (strain ATCC 13939 / DSM 20539 / JCM 16871 / CCUG 27074 / LMG 4051 / NBRC 15346 / NCIMB 9279 / VKM B-1422 / R1) protein is 3-isopropylmalate dehydratase small subunit 1 (leuD1).